Reading from the N-terminus, the 107-residue chain is Small ribosomal subunit protein uS17 (107 aa).

This sequence belongs to the universal ribosomal protein uS17 family. Part of the 30S ribosomal subunit.

Its function is as follows. One of the primary rRNA binding proteins, it binds specifically to the 5'-end of 16S ribosomal RNA. The protein is Small ribosomal subunit protein uS17 of Nitrosopumilus maritimus (strain SCM1).